A 1123-amino-acid chain; its full sequence is RNA-binding protein 6 (1123 aa).

2 disordered regions span residues 1-391 (MWGD…EGGL) and 413-454 (LPGS…EEKP). Residue S17 is modified to Phosphoserine. K36 participates in a covalent cross-link: Glycyl lysine isopeptide (Lys-Gly) (interchain with G-Cter in SUMO2). Positions 79–97 (DGPHGDYRGGEGPGHDFRG) are enriched in basic and acidic residues. The segment covering 98 to 114 (GDFSSSDFQSRDSSQLD) has biased composition (low complexity). Composition is skewed to basic and acidic residues over residues 115–131 (FRGR…REGP) and 145–237 (YRGR…DFRG). At S240 the chain carries Phosphoserine. Basic and acidic residues-rich tracts occupy residues 245–286 (LDFR…REMP) and 301–323 (QDRE…HTIE). K331 is covalently cross-linked (Glycyl lysine isopeptide (Lys-Gly) (interchain with G-Cter in SUMO2)). Positions 332 to 354 (GEFEHSETREGETQGVAFEHESP) are enriched in basic and acidic residues. T344 is modified (phosphothreonine). The segment covering 356-365 (DFQNSQSPVQ) has biased composition (polar residues). Phosphoserine is present on residues S360 and S362. Composition is skewed to basic and acidic residues over residues 366 to 391 (DQDK…EGGL) and 431 to 454 (KTAR…EEKP). Glycyl lysine isopeptide (Lys-Gly) (interchain with G-Cter in SUMO2) cross-links involve residues K386, K453, K469, and K569. The region spanning 456-536 (RLIRLSGVPE…KEVTLEYVSS (81 aa)) is the RRM domain. Disordered regions lie at residues 574–654 (TYPQ…QDGE), 741–787 (KRRN…QSSS), and 827–948 (EEEI…EEDK). Composition is skewed to basic and acidic residues over residues 597–654 (PADK…QDGE) and 742–754 (RRND…DHMH). Residues 772-787 (SDWSSDTNRQGQQSSS) are compositionally biased toward polar residues. A compositionally biased stretch (basic and acidic residues) spans 843–860 (SKKEMSKRDGKEKKDRGV). Residues K871, K879, and K887 each participate in a glycyl lysine isopeptide (Lys-Gly) (interchain with G-Cter in SUMO2) cross-link. S891 is modified (phosphoserine). The span at 910 to 922 (GDSDYEEEEEEEQ) shows a compositional bias: acidic residues. The segment covering 934-948 (QKREEQTKKENEEDK) has biased composition (basic and acidic residues). Glycyl lysine isopeptide (Lys-Gly) (interchain with G-Cter in SUMO2) cross-links involve residues K935, K948, K991, and K1019. A compositionally biased stretch (basic and acidic residues) spans 1004 to 1051 (EREGKFKGRGNDRREKLQSFDSPERKRIKYSRETDSDRKLVDKEDIDT). Residues 1004 to 1106 (EREGKFKGRG…RTSKRQSNET (103 aa)) form a disordered region. Phosphoserine occurs at positions 1022 and 1025. Glycyl lysine isopeptide (Lys-Gly) (interchain with G-Cter in SUMO2) cross-links involve residues K1042, K1046, and K1066. The 47-residue stretch at 1051–1097 (TSSKGGCVQQATGWRKGTGLGYGHPGLASSEEAEGRMRGPSVGASGR) folds into the G-patch domain.

As to quaternary structure, may interact with FAM168B. In terms of tissue distribution, ubiquitous in adults.

The protein localises to the nucleus. Specifically binds poly(G) RNA homopolymers in vitro. In Homo sapiens (Human), this protein is RNA-binding protein 6 (RBM6).